The chain runs to 302 residues: Quinolinate synthase (302 aa).

His24 and Ser41 together coordinate iminosuccinate. Cys86 contributes to the [4Fe-4S] cluster binding site. Iminosuccinate contacts are provided by residues 112 to 114 (YVN) and Ser129. Residue Cys171 participates in [4Fe-4S] cluster binding. Iminosuccinate is bound by residues 197–199 (HPE) and Thr214. Cys259 is a binding site for [4Fe-4S] cluster.

This sequence belongs to the quinolinate synthase family. Type 2 subfamily. Requires [4Fe-4S] cluster as cofactor.

It is found in the cytoplasm. The enzyme catalyses iminosuccinate + dihydroxyacetone phosphate = quinolinate + phosphate + 2 H2O + H(+). It functions in the pathway cofactor biosynthesis; NAD(+) biosynthesis; quinolinate from iminoaspartate: step 1/1. Its function is as follows. Catalyzes the condensation of iminoaspartate with dihydroxyacetone phosphate to form quinolinate. The sequence is that of Quinolinate synthase from Dehalococcoides mccartyi (strain ATCC BAA-2100 / JCM 16839 / KCTC 5957 / BAV1).